Reading from the N-terminus, the 481-residue chain is Argininosuccinate lyase (481 aa).

It belongs to the lyase 1 family. Argininosuccinate lyase subfamily.

Its subcellular location is the cytoplasm. The enzyme catalyses 2-(N(omega)-L-arginino)succinate = fumarate + L-arginine. It functions in the pathway amino-acid biosynthesis; L-arginine biosynthesis; L-arginine from L-ornithine and carbamoyl phosphate: step 3/3. This is Argininosuccinate lyase from Methanococcus vannielii (strain ATCC 35089 / DSM 1224 / JCM 13029 / OCM 148 / SB).